The following is a 430-amino-acid chain: Histidine--tRNA ligase (430 aa).

This sequence belongs to the class-II aminoacyl-tRNA synthetase family. As to quaternary structure, homodimer.

It localises to the cytoplasm. The catalysed reaction is tRNA(His) + L-histidine + ATP = L-histidyl-tRNA(His) + AMP + diphosphate + H(+). In Acinetobacter baumannii (strain ATCC 17978 / DSM 105126 / CIP 53.77 / LMG 1025 / NCDC KC755 / 5377), this protein is Histidine--tRNA ligase.